The chain runs to 285 residues: Pantothenate synthetase (285 aa).

30–37 (MGNLHAGH) is an ATP binding site. Histidine 37 acts as the Proton donor in catalysis. Glutamine 61 is a (R)-pantoate binding site. Beta-alanine is bound at residue glutamine 61. Residue 149–152 (GEKD) participates in ATP binding. Residue glutamine 155 coordinates (R)-pantoate. An ATP-binding site is contributed by 186 to 189 (LSSR).

This sequence belongs to the pantothenate synthetase family. Homodimer.

Its subcellular location is the cytoplasm. It catalyses the reaction (R)-pantoate + beta-alanine + ATP = (R)-pantothenate + AMP + diphosphate + H(+). The protein operates within cofactor biosynthesis; (R)-pantothenate biosynthesis; (R)-pantothenate from (R)-pantoate and beta-alanine: step 1/1. Functionally, catalyzes the condensation of pantoate with beta-alanine in an ATP-dependent reaction via a pantoyl-adenylate intermediate. The chain is Pantothenate synthetase from Ectopseudomonas mendocina (strain ymp) (Pseudomonas mendocina).